The chain runs to 421 residues: eIF5-mimic protein 1 (421 aa).

A disordered region spans residues 1-24 (MNTGKQQKPVLTGQRFKTRKRDEK). Positions 250–417 (TQQTLGTRKE…QNAEEESESE (168 aa)) constitute a W2 domain.

It belongs to the BZW family.

Its subcellular location is the cytoplasm. Translation initiation regulator which may repress non-AUG initiated translation and repeat-associated non-AUG (RAN) initiated translation by acting as a competitive inhibitor of eukaryotic translation initiation factor 5 (EIF5) function. This is eIF5-mimic protein 1 (bzw2) from Danio rerio (Zebrafish).